Here is a 341-residue protein sequence, read N- to C-terminus: Anthranilate phosphoribosyltransferase (341 aa).

Residues G82, 85–86 (GD), T90, 92–95 (NIST), 110–118 (KHGGRSVSG), and S122 contribute to the 5-phospho-alpha-D-ribose 1-diphosphate site. G82 lines the anthranilate pocket. S94 is a Mg(2+) binding site. An anthranilate-binding site is contributed by R168. Positions 227 and 228 each coordinate Mg(2+).

It belongs to the anthranilate phosphoribosyltransferase family. In terms of assembly, homodimer. It depends on Mg(2+) as a cofactor.

The enzyme catalyses N-(5-phospho-beta-D-ribosyl)anthranilate + diphosphate = 5-phospho-alpha-D-ribose 1-diphosphate + anthranilate. It participates in amino-acid biosynthesis; L-tryptophan biosynthesis; L-tryptophan from chorismate: step 2/5. Functionally, catalyzes the transfer of the phosphoribosyl group of 5-phosphorylribose-1-pyrophosphate (PRPP) to anthranilate to yield N-(5'-phosphoribosyl)-anthranilate (PRA). In Nitrosomonas europaea (strain ATCC 19718 / CIP 103999 / KCTC 2705 / NBRC 14298), this protein is Anthranilate phosphoribosyltransferase.